The sequence spans 325 residues: Apoptosis-enhancing nuclease (325 aa).

The short motif at 27 to 35 (RKRHKRRSR) is the Nucleolar localization signal element. The tract at residues 85-105 (RAGSGSAPCSRRPAPGKASGP) is disordered. The Exonuclease domain occupies 110 to 266 (CVAIDCEMVG…EDATTAMELY (157 aa)). Positions 165-188 (RQHMRKAVPFQVAQKEILKLLKGK) match the Nuclear localization signal motif. The disordered stretch occupies residues 281–325 (LWTCPEDREPDSSTDMEQYMEDQYWPDDLAHGSRGGAREAQDRRN). Residues 308–325 (DLAHGSRGGAREAQDRRN) show a composition bias toward basic and acidic residues.

It is found in the nucleus. It localises to the nucleolus. Its function is as follows. Exonuclease with activity against single- and double-stranded DNA and RNA. Mediates p53-induced apoptosis. When induced by p53 following DNA damage, digests double-stranded DNA to form single-stranded DNA and amplifies DNA damage signals, leading to enhancement of apoptosis. The sequence is that of Apoptosis-enhancing nuclease (AEN) from Homo sapiens (Human).